Consider the following 201-residue polypeptide: Urease accessory protein UreG (201 aa).

11–18 lines the GTP pocket; sequence GPVGSGKT.

It belongs to the SIMIBI class G3E GTPase family. UreG subfamily. As to quaternary structure, homodimer. UreD, UreF and UreG form a complex that acts as a GTP-hydrolysis-dependent molecular chaperone, activating the urease apoprotein by helping to assemble the nickel containing metallocenter of UreC. The UreE protein probably delivers the nickel.

The protein resides in the cytoplasm. Its function is as follows. Facilitates the functional incorporation of the urease nickel metallocenter. This process requires GTP hydrolysis, probably effectuated by UreG. The sequence is that of Urease accessory protein UreG from Prochlorococcus marinus subsp. pastoris (strain CCMP1986 / NIES-2087 / MED4).